The chain runs to 531 residues: Protein RPN4 (531 aa).

The interval 338–432 is disordered; it reads RFPSPSTSAN…PSAHTSSSDG (95 aa). Residues 341-354 show a composition bias toward polar residues; that stretch reads SPSTSANVPSTATT. The segment covering 362–375 has biased composition (low complexity); sequence SSSNRSCVSNSNEN. A Nuclear localization signal motif is present at residues 382–398; the sequence is KKPTSAVVSSNASRRKL. A compositionally biased stretch (basic residues) spans 394 to 407; it reads SRRKLINYTKKHLS. The segment covering 408–430 has biased composition (low complexity); the sequence is SHSSTNSNSKPSTASPSAHTSSS.

In terms of assembly, probably interacts with SEC63. Interacts with MUB1, UBR2 and RPN2. Ubiquitinated by UBR2 in the presence of UBC2; which leads to proteasomal degradation.

Its subcellular location is the nucleus. Acts as a transcriptional activator of a number of genes encoding proteasomal subunits. Binds to a PACE (proteasome-associated control element) DNA sequence 5'-GGTGGCAAA-3'. Its expression is in turn regulated by the 26S proteasome, thereby providing a negative feedback control mechanism. Required for normal growth at low temperatures. This is Protein RPN4 (RPN4) from Saccharomyces cerevisiae (strain ATCC 204508 / S288c) (Baker's yeast).